The primary structure comprises 134 residues: ATP synthase epsilon chain, chloroplastic (134 aa).

The protein belongs to the ATPase epsilon chain family. As to quaternary structure, F-type ATPases have 2 components, CF(1) - the catalytic core - and CF(0) - the membrane proton channel. CF(1) has five subunits: alpha(3), beta(3), gamma(1), delta(1), epsilon(1). CF(0) has three main subunits: a, b and c.

The protein localises to the plastid. It is found in the chloroplast thylakoid membrane. Produces ATP from ADP in the presence of a proton gradient across the membrane. This chain is ATP synthase epsilon chain, chloroplastic, found in Pyropia yezoensis (Susabi-nori).